Consider the following 158-residue polypeptide: uncharacterized protein (158 aa).

In terms of domain architecture, Nudix hydrolase spans 3–130; it reads YLQRVTNCVL…DGHILDFMMK (128 aa). Positions 34–55 match the Nudix box motif; the sequence is GKMESGESVRDSVIREYREETG. Residues Glu49 and Glu53 each contribute to the Mg(2+) site.

This sequence belongs to the Nudix hydrolase family. Requires Mg(2+) as cofactor.

This is an uncharacterized protein from Bacillus subtilis (strain 168).